A 175-amino-acid polypeptide reads, in one-letter code: uncharacterized protein (175 aa).

2 disordered regions span residues 1-32 (MSHK…KLRH) and 156-175 (KQKQ…KYRQ). Positions 14–24 (LLSSSSPVAKK) are enriched in low complexity.

This is an uncharacterized protein from Mycoplasma pneumoniae (strain ATCC 29342 / M129 / Subtype 1) (Mycoplasmoides pneumoniae).